Here is a 410-residue protein sequence, read N- to C-terminus: Phosphoglycerate kinase (410 aa).

Substrate contacts are provided by residues 19–21 (DLN), arginine 34, 57–60 (HQGK), arginine 114, and arginine 154. ATP-binding positions include glutamate 332 and 358-361 (GGHS).

Belongs to the phosphoglycerate kinase family. In terms of assembly, homodimer.

The protein resides in the cytoplasm. It catalyses the reaction (2R)-3-phosphoglycerate + ATP = (2R)-3-phospho-glyceroyl phosphate + ADP. It participates in carbohydrate degradation; glycolysis; pyruvate from D-glyceraldehyde 3-phosphate: step 2/5. The sequence is that of Phosphoglycerate kinase (pgk) from Pyrococcus abyssi (strain GE5 / Orsay).